A 424-amino-acid chain; its full sequence is Serine--tRNA ligase (424 aa).

Thr-230–Glu-232 is a binding site for L-serine. Residue Arg-261–Glu-263 participates in ATP binding. An L-serine-binding site is contributed by Glu-284. Glu-348–Ser-351 contacts ATP. Residue Ser-384 participates in L-serine binding.

This sequence belongs to the class-II aminoacyl-tRNA synthetase family. Type-1 seryl-tRNA synthetase subfamily. In terms of assembly, homodimer. The tRNA molecule binds across the dimer.

Its subcellular location is the cytoplasm. It catalyses the reaction tRNA(Ser) + L-serine + ATP = L-seryl-tRNA(Ser) + AMP + diphosphate + H(+). The catalysed reaction is tRNA(Sec) + L-serine + ATP = L-seryl-tRNA(Sec) + AMP + diphosphate + H(+). It participates in aminoacyl-tRNA biosynthesis; selenocysteinyl-tRNA(Sec) biosynthesis; L-seryl-tRNA(Sec) from L-serine and tRNA(Sec): step 1/1. Its function is as follows. Catalyzes the attachment of serine to tRNA(Ser). Is also able to aminoacylate tRNA(Sec) with serine, to form the misacylated tRNA L-seryl-tRNA(Sec), which will be further converted into selenocysteinyl-tRNA(Sec). This is Serine--tRNA ligase from Desulforamulus reducens (strain ATCC BAA-1160 / DSM 100696 / MI-1) (Desulfotomaculum reducens).